The sequence spans 493 residues: Glutamyl-tRNA(Gln) amidotransferase subunit A (493 aa).

Catalysis depends on charge relay system residues Lys79 and Ser159. The Acyl-ester intermediate role is filled by Ser183.

This sequence belongs to the amidase family. GatA subfamily. Heterotrimer of A, B and C subunits.

The enzyme catalyses L-glutamyl-tRNA(Gln) + L-glutamine + ATP + H2O = L-glutaminyl-tRNA(Gln) + L-glutamate + ADP + phosphate + H(+). In terms of biological role, allows the formation of correctly charged Gln-tRNA(Gln) through the transamidation of misacylated Glu-tRNA(Gln) in organisms which lack glutaminyl-tRNA synthetase. The reaction takes place in the presence of glutamine and ATP through an activated gamma-phospho-Glu-tRNA(Gln). The protein is Glutamyl-tRNA(Gln) amidotransferase subunit A of Rhizobium johnstonii (strain DSM 114642 / LMG 32736 / 3841) (Rhizobium leguminosarum bv. viciae).